The following is an 872-amino-acid chain: Alanine--tRNA ligase (872 aa).

Positions 571, 575, 674, and 678 each coordinate Zn(2+).

Belongs to the class-II aminoacyl-tRNA synthetase family. The cofactor is Zn(2+).

It is found in the cytoplasm. It carries out the reaction tRNA(Ala) + L-alanine + ATP = L-alanyl-tRNA(Ala) + AMP + diphosphate. Catalyzes the attachment of alanine to tRNA(Ala) in a two-step reaction: alanine is first activated by ATP to form Ala-AMP and then transferred to the acceptor end of tRNA(Ala). Also edits incorrectly charged Ser-tRNA(Ala) and Gly-tRNA(Ala) via its editing domain. This is Alanine--tRNA ligase from Symbiobacterium thermophilum (strain DSM 24528 / JCM 14929 / IAM 14863 / T).